Here is a 212-residue protein sequence, read N- to C-terminus: Imidazole glycerol phosphate synthase subunit HisH 2 (212 aa).

The region spanning 4–211 (HLGLIDYGMG…LDWLQRGAPI (208 aa)) is the Glutamine amidotransferase type-1 domain. Cys82 (nucleophile) is an active-site residue. Catalysis depends on residues His186 and Glu188.

Heterodimer of HisH and HisF.

It is found in the cytoplasm. The catalysed reaction is 5-[(5-phospho-1-deoxy-D-ribulos-1-ylimino)methylamino]-1-(5-phospho-beta-D-ribosyl)imidazole-4-carboxamide + L-glutamine = D-erythro-1-(imidazol-4-yl)glycerol 3-phosphate + 5-amino-1-(5-phospho-beta-D-ribosyl)imidazole-4-carboxamide + L-glutamate + H(+). The enzyme catalyses L-glutamine + H2O = L-glutamate + NH4(+). The protein operates within amino-acid biosynthesis; L-histidine biosynthesis; L-histidine from 5-phospho-alpha-D-ribose 1-diphosphate: step 5/9. In terms of biological role, IGPS catalyzes the conversion of PRFAR and glutamine to IGP, AICAR and glutamate. The HisH subunit provides the glutamine amidotransferase activity that produces the ammonia necessary to HisF for the synthesis of IGP and AICAR. The sequence is that of Imidazole glycerol phosphate synthase subunit HisH 2 (hisH2) from Parasynechococcus marenigrum (strain WH8102).